The primary structure comprises 488 residues: Probable cytosol aminopeptidase (488 aa).

The Mn(2+) site is built by K251 and D256. K263 is an active-site residue. D274, D333, and E335 together coordinate Mn(2+). R337 is an active-site residue.

The protein belongs to the peptidase M17 family. It depends on Mn(2+) as a cofactor.

Its subcellular location is the cytoplasm. The catalysed reaction is Release of an N-terminal amino acid, Xaa-|-Yaa-, in which Xaa is preferably Leu, but may be other amino acids including Pro although not Arg or Lys, and Yaa may be Pro. Amino acid amides and methyl esters are also readily hydrolyzed, but rates on arylamides are exceedingly low.. It carries out the reaction Release of an N-terminal amino acid, preferentially leucine, but not glutamic or aspartic acids.. Presumably involved in the processing and regular turnover of intracellular proteins. Catalyzes the removal of unsubstituted N-terminal amino acids from various peptides. The chain is Probable cytosol aminopeptidase from Cenarchaeum symbiosum (strain A).